The chain runs to 367 residues: Flagellar P-ring protein (367 aa).

The signal sequence occupies residues 1–22 (MRRMLVIRWILAIHLIATQVFA).

This sequence belongs to the FlgI family. The basal body constitutes a major portion of the flagellar organelle and consists of four rings (L,P,S, and M) mounted on a central rod.

The protein resides in the periplasm. Its subcellular location is the bacterial flagellum basal body. Functionally, assembles around the rod to form the L-ring and probably protects the motor/basal body from shearing forces during rotation. This chain is Flagellar P-ring protein, found in Legionella pneumophila (strain Corby).